We begin with the raw amino-acid sequence, 230 residues long: 3-beta-hydroxysteroid-Delta(8),Delta(7)-isomerase (230 aa).

Thr2 is subject to N-acetylthreonine. Transmembrane regions (helical) follow at residues 29–49 (WHILVGLFSFSGVLIVITWLL), 66–86 (LCWFAVCTFIHLVIEGWFSFY), 121–141 (MESVTACLWGPLSLWVVIAFL), and 185–205 (FWFYFVIMNAIWLVIPGILVF). The EXPERA domain maps to 61–204 (GRRLALCWFA…IWLVIPGILV (144 aa)).

It belongs to the EBP family. Expressed in liver.

It localises to the endoplasmic reticulum membrane. The protein resides in the nucleus envelope. Its subcellular location is the cytoplasmic vesicle. The catalysed reaction is lathosterol = 5alpha-cholest-8-en-3beta-ol. The enzyme catalyses zymosterol = 5alpha-cholesta-7,24-dien-3beta-ol. It catalyses the reaction 5,6alpha-epoxy-5alpha-cholestan-3beta-ol + H2O = 5alpha-cholestane-3beta,5,6beta-triol. It carries out the reaction 5,6beta-epoxy-5beta-cholestan-3beta-ol + H2O = 5alpha-cholestane-3beta,5,6beta-triol. Its pathway is steroid biosynthesis; cholesterol biosynthesis. Its activity is regulated as follows. Enzymatic activity is induced by 25-hydroxycholesterol, cholestyramine and lovastatin. Functionally, isomerase that catalyzes the conversion of Delta(8)-sterols to their corresponding Delta(7)-isomers. Its function is as follows. Component of the microsomal antiestrogen binding site (AEBS), a multiproteic complex at the ER membrane that consists of an association between EBP and 7-dehydrocholesterol reductase/DHCR7. This complex is responsible for cholesterol-5,6-epoxide hydrolase (ChEH) activity, which consists in the hydration of cholesterol-5,6-epoxides (5,6-EC) into cholestane-3beta,5alpha,6beta-triol (CT). The precise role of each component of this complex has not been described yet. This chain is 3-beta-hydroxysteroid-Delta(8),Delta(7)-isomerase, found in Rattus norvegicus (Rat).